The chain runs to 217 residues: 5'-methylthioadenosine/S-adenosylhomocysteine nucleosidase (217 aa).

Catalysis depends on Glu11, which acts as the Proton acceptor. Substrate-binding positions include Gly77, Val139, and 159–160 (MD). The active-site Proton donor is Asp183.

This sequence belongs to the PNP/UDP phosphorylase family. MtnN subfamily.

The enzyme catalyses S-adenosyl-L-homocysteine + H2O = S-(5-deoxy-D-ribos-5-yl)-L-homocysteine + adenine. It catalyses the reaction S-methyl-5'-thioadenosine + H2O = 5-(methylsulfanyl)-D-ribose + adenine. It carries out the reaction 5'-deoxyadenosine + H2O = 5-deoxy-D-ribose + adenine. It functions in the pathway amino-acid biosynthesis; L-methionine biosynthesis via salvage pathway; S-methyl-5-thio-alpha-D-ribose 1-phosphate from S-methyl-5'-thioadenosine (hydrolase route): step 1/2. In terms of biological role, catalyzes the irreversible cleavage of the glycosidic bond in both 5'-methylthioadenosine (MTA) and S-adenosylhomocysteine (SAH/AdoHcy) to adenine and the corresponding thioribose, 5'-methylthioribose and S-ribosylhomocysteine, respectively. Also cleaves 5'-deoxyadenosine, a toxic by-product of radical S-adenosylmethionine (SAM) enzymes, into 5-deoxyribose and adenine. The protein is 5'-methylthioadenosine/S-adenosylhomocysteine nucleosidase (mtnN) of Thermotoga maritima (strain ATCC 43589 / DSM 3109 / JCM 10099 / NBRC 100826 / MSB8).